Reading from the N-terminus, the 2442-residue chain is Piezo-type mechanosensitive ion channel component 1 (2442 aa).

The Extracellular portion of the chain corresponds to M1–P5. Residues L6–I26 traverse the membrane as a helical segment. R27 is a topological domain (cytoplasmic). Residues P28–I48 traverse the membrane as a helical segment. The Extracellular portion of the chain corresponds to R49–K56. Residues L57–G77 form a helical membrane-spanning segment. Residues S78–A122 lie on the Cytoplasmic side of the membrane. The chain crosses the membrane as a helical span at residues F123 to L143. At S144–L173 the chain is on the extracellular side. The helical transmembrane segment at A174–F196 threads the bilayer. Over T197 to A198 the chain is Cytoplasmic. Residues Y199 to I219 form a helical membrane-spanning segment. Residues S220–K239 lie on the Extracellular side of the membrane. A helical transmembrane segment spans residues F240 to V260. The Cytoplasmic portion of the chain corresponds to H261–L303. A helical transmembrane segment spans residues I304–V324. Topologically, residues A325–G454 are extracellular. N-linked (GlcNAc...) asparagine glycosylation is found at N332, N392, and N440. Residues L389–Q417 form a disordered region. Residues M455–M475 form a helical membrane-spanning segment. The Cytoplasmic segment spans residues T476 to A478. Residues L479–F499 traverse the membrane as a helical segment. Topologically, residues R500 to S506 are extracellular. The helical transmembrane segment at F507 to L527 threads the bilayer. Residues S528–P552 are Cytoplasmic-facing. Residues V553 to L573 traverse the membrane as a helical segment. Residues R574–K633 are Extracellular-facing. The chain crosses the membrane as a helical span at residues V634 to A654. Residues P655 to N656 lie on the Cytoplasmic side of the membrane. The chain crosses the membrane as a helical span at residues F657–F677. Over R678–L683 the chain is Extracellular. Residues A684–I704 form a helical membrane-spanning segment. Topologically, residues Y705–S739 are cytoplasmic. A helical transmembrane segment spans residues G740–L760. The Extracellular segment spans residues K761–K832. Positions S768 to G798 are disordered. Over residues T782–S794 the composition is skewed to low complexity. N-linked (GlcNAc...) asparagine glycosylation occurs at N816. The helical transmembrane segment at I833 to L853 threads the bilayer. The Cytoplasmic portion of the chain corresponds to V854 to F874. Residues M875–P895 traverse the membrane as a helical segment. Topologically, residues E896–P931 are extracellular. N-linked (GlcNAc...) asparagine glycans are attached at residues N908 and N913. The helical transmembrane segment at I932–I952 threads the bilayer. At Y953–Q990 the chain is on the cytoplasmic side. Residues F991 to I1011 traverse the membrane as a helical segment. Position 1012 (D1012) is a topological domain, extracellular. Residues I1013–L1033 form a helical membrane-spanning segment. Residues N1034 to R1041 lie on the Cytoplasmic side of the membrane. The chain crosses the membrane as a helical span at residues I1042–V1062. Over G1063 to S1096 the chain is Extracellular. N1088 and N1094 each carry an N-linked (GlcNAc...) asparagine glycan. The chain crosses the membrane as a helical span at residues I1097 to A1117. The Cytoplasmic segment spans residues S1118 to D1160. The chain crosses the membrane as a helical span at residues Y1161–A1181. Over G1182–S1187 the chain is Extracellular. The helical transmembrane segment at L1188–M1210 threads the bilayer. Topologically, residues N1211–T1231 are cytoplasmic. Residues L1232–F1252 traverse the membrane as a helical segment. At D1253–N1299 the chain is on the extracellular side. Residues I1300–W1320 traverse the membrane as a helical segment. Residues Y1321–D1615 lie on the Cytoplasmic side of the membrane. Positions D1463 to K1502 are disordered. Over residues E1488–N1498 the composition is skewed to acidic residues. Residues I1616–P1636 form a helical membrane-spanning segment. At L1637–K1654 the chain is on the extracellular side. N1646 is a glycosylation site (N-linked (GlcNAc...) asparagine). Residues F1655–Q1675 form a helical membrane-spanning segment. Residues F1676 to R1706 are Cytoplasmic-facing. The chain crosses the membrane as a helical span at residues D1707–L1727. The Extracellular segment spans residues R1728–P1833. A glycan (N-linked (GlcNAc...) asparagine) is linked at N1737. The chain crosses the membrane as a helical span at residues I1834 to G1854. At E1855–K1866 the chain is on the cytoplasmic side. The helical transmembrane segment at A1867–I1887 threads the bilayer. Topologically, residues D1888 to K1900 are extracellular. A helical membrane pass occupies residues L1901–N1921. Residues M1922–N1930 are Cytoplasmic-facing. A helical membrane pass occupies residues H1931–I1951. Over R1952–G2046 the chain is Extracellular. Residues F2047–L2067 form a helical membrane-spanning segment. Topologically, residues N2068–S2346 are cytoplasmic. A helical membrane pass occupies residues F2347–V2367. Over G2368–E2442 the chain is Extracellular.

This sequence belongs to the PIEZO (TC 1.A.75) family. Expressed in the pharyngeal-intestinal and spermathecal-uterine valves and in multiple reproductive tissues including the germline, somatic oviduct, and spermatheca. During reproduction, it is expressed in sheath cells, sperm, both spermathecal valves and the spermathecal bag cells.

The protein localises to the cell membrane. Its function is as follows. Pore-forming subunit of a mechanosensitive non-specific cation channel. Generates currents characterized by a linear current-voltage relationship. Plays a role in reproduction by positively regulating inter-tissue signaling to promote oocyte maturation, ovulation and fertilization, and sperm navigation from and to the spermatheca. May play a role in regulating cytosolic and endoplasmic reticulum calcium ion release. The sequence is that of Piezo-type mechanosensitive ion channel component 1 from Caenorhabditis elegans.